Here is a 166-residue protein sequence, read N- to C-terminus: Large ribosomal subunit protein mL41 (166 aa).

The transit peptide at 1–26 (MQNCIKLVPLALKCPQRAISTSAVLD) directs the protein to the mitochondrion.

Belongs to the mitochondrion-specific ribosomal protein mL41 family. In terms of assembly, component of the mitochondrial ribosome large subunit (39S) which comprises a 16S rRNA and about 50 distinct proteins.

It is found in the mitochondrion. In Drosophila pseudoobscura pseudoobscura (Fruit fly), this protein is Large ribosomal subunit protein mL41 (mRpL41).